The following is a 155-amino-acid chain: Cell division protein SepF (155 aa).

Residues Thr-16–Glu-35 show a composition bias toward acidic residues. Positions Thr-16 to Gln-44 are disordered.

The protein belongs to the SepF family. Homodimer. Interacts with FtsZ.

It localises to the cytoplasm. In terms of biological role, cell division protein that is part of the divisome complex and is recruited early to the Z-ring. Probably stimulates Z-ring formation, perhaps through the cross-linking of FtsZ protofilaments. Its function overlaps with FtsA. The sequence is that of Cell division protein SepF from Acetivibrio thermocellus (strain ATCC 27405 / DSM 1237 / JCM 9322 / NBRC 103400 / NCIMB 10682 / NRRL B-4536 / VPI 7372) (Clostridium thermocellum).